Reading from the N-terminus, the 130-residue chain is Small ribosomal subunit protein uS9 (130 aa).

The disordered stretch occupies residues 107–130 (DSREVERKKVGLRKARRRPQFSKR). A compositionally biased stretch (basic residues) spans 116-130 (VGLRKARRRPQFSKR).

The protein belongs to the universal ribosomal protein uS9 family.

This Marinomonas sp. (strain MWYL1) protein is Small ribosomal subunit protein uS9.